Here is a 365-residue protein sequence, read N- to C-terminus: Histidinol-phosphate aminotransferase (365 aa).

Position 223 is an N6-(pyridoxal phosphate)lysine (Lys-223).

It belongs to the class-II pyridoxal-phosphate-dependent aminotransferase family. Histidinol-phosphate aminotransferase subfamily. Homodimer. It depends on pyridoxal 5'-phosphate as a cofactor.

The catalysed reaction is L-histidinol phosphate + 2-oxoglutarate = 3-(imidazol-4-yl)-2-oxopropyl phosphate + L-glutamate. It participates in amino-acid biosynthesis; L-histidine biosynthesis; L-histidine from 5-phospho-alpha-D-ribose 1-diphosphate: step 7/9. In Bacillus pumilus (strain SAFR-032), this protein is Histidinol-phosphate aminotransferase.